The primary structure comprises 128 residues: Kinetoplast-associated protein 4 (128 aa).

A propeptide spanning residues 1 to 10 (MLRFVPRRLA) is cleaved from the precursor. Residues 60–87 (AHPGFKRKEKEPKELKAAKAAKTSTPRA) form a disordered region. The segment covering 65–76 (KRKEKEPKELKA) has biased composition (basic and acidic residues).

Belongs to the KAP family. As to quaternary structure, associates with the kinetoplast DNA network.

It localises to the mitochondrion matrix. It is found in the kinetoplast. In terms of biological role, histone H1-like DNA-binding protein involved in the organization and segregation of kinetoplast DNA (kDNA). The mitochondrial DNA of kinetoplastid protozoa consists of about 5,000 minicircles and 20 to 30 maxicircles. These circular DNAs are held together by catenation into a highly organized compact disk structure referred to as a kinetoplast DNA (kDNA) network. Binds preferentially to a specific fragment of minicircle DNA and is able to compact kDNA networks through DNA charge neutralization and condensation. The polypeptide is Kinetoplast-associated protein 4 (KAP4) (Crithidia fasciculata).